An 85-amino-acid chain; its full sequence is Large ribosomal subunit protein bL31B (85 aa).

It belongs to the bacterial ribosomal protein bL31 family. Type B subfamily. In terms of assembly, part of the 50S ribosomal subunit.

This is Large ribosomal subunit protein bL31B from Staphylococcus epidermidis (strain ATCC 35984 / DSM 28319 / BCRC 17069 / CCUG 31568 / BM 3577 / RP62A).